Here is a 90-residue protein sequence, read N- to C-terminus: Probable Fe(2+)-trafficking protein (90 aa).

The protein belongs to the Fe(2+)-trafficking protein family. As to quaternary structure, monomer.

Functionally, could be a mediator in iron transactions between iron acquisition and iron-requiring processes, such as synthesis and/or repair of Fe-S clusters in biosynthetic enzymes. The protein is Probable Fe(2+)-trafficking protein of Yersinia enterocolitica serotype O:8 / biotype 1B (strain NCTC 13174 / 8081).